The following is a 549-amino-acid chain: Hydroxylamine reductase (549 aa).

[2Fe-2S] cluster contacts are provided by C3, C6, C18, and C25. Hybrid [4Fe-2O-2S] cluster contacts are provided by H248, E272, C316, C404, C432, C457, E491, and K493. C404 bears the Cysteine persulfide mark.

Belongs to the HCP family. The cofactor is [2Fe-2S] cluster. Hybrid [4Fe-2O-2S] cluster serves as cofactor.

The protein localises to the cytoplasm. It catalyses the reaction A + NH4(+) + H2O = hydroxylamine + AH2 + H(+). Functionally, catalyzes the reduction of hydroxylamine to form NH(3) and H(2)O. This chain is Hydroxylamine reductase, found in Aeromonas hydrophila subsp. hydrophila (strain ATCC 7966 / DSM 30187 / BCRC 13018 / CCUG 14551 / JCM 1027 / KCTC 2358 / NCIMB 9240 / NCTC 8049).